The following is a 42-amino-acid chain: Large ribosomal subunit protein P2 (42 aa).

It belongs to the eukaryotic ribosomal protein P1/P2 family. In terms of assembly, P1 and P2 exist as dimers at the large ribosomal subunit. Phosphorylated.

Its function is as follows. Plays an important role in the elongation step of protein synthesis. The chain is Large ribosomal subunit protein P2 from Triticum aestivum (Wheat).